Reading from the N-terminus, the 1288-residue chain is MEGSFQFNKSKQTNNNSSLDSNNIINDNINNNLNFENNNNNNNNNNNNNNNNNNNNNNNNTNNNNTTNDTSKTSANSTSTEDDEEDILGNRKKDTTGSRVLPMDTSLTGAAEPSKKRKNTQDDSEVEVQYHPQKRASFSLNISPTQLQNDLSLNIFNVSNSNNNNNSNNNNNNNNNNNNNNNKINNNSNLILNSSVDSTTSSNNNNNKNSNDNQQPQQQPEEIEGELNRERQERDKMLHEEAEIEQYKYGDGEEGENYEIMVTPHHRTSFGHITSANSDETTNNESGSPINSRKMVTDEEDPHSSHNEDHQSDQDNHGQFMNDEHQSTDDDQNKSDNEKESESARNSGDLQQKVHNSKDESTVSTPQHIFNNGNGEGEEEDDDDEEYDVPLRIQTVANNKSTKLSLSNCWLKVIPTDVWSILELRDLDLSANQLKKVSKSIGLLVHLKRLRLNHNQLTALPKELYSLPRLTTLYLNNNNFKVVPKEINRLTSLKTLDLSFNQITDISPQTNLHQMTNLVELRLRYNQLSSLPQNMLESNHLQVLWLEGNRLPLNKAILKKSPSEILSFLRGYKPPNKKVNDKVINKAHVNPALPPIDTASTIAVAQVFAQKELDTKKRKKENLDDFKKQHIETELKLKQLEEELQIANAKATKFEEEASLLQQQFNNPNTPTGPSLNLPSILLNQPHLGWDQQQQQQQQQSPNVSTPPISTSPVLTGGQQVVNGISQISLLSPTQQINNPPSPVTQFNQASPQHNNNQQQQQQQQQQQQQQQQQQQQQQQQQQQQQQQQQQQQQQQQQQQQNGSPQQPHVNNNNNNNIQQNKDHQFPVPTIPAKIIEVEKPFEWEVPLSEIAIGARIGRGGYGQVFRGSWRGTEVAVKMLFNDNVNLKLISDLRKEVDLLCKLRHPNIVLFMGACTEPSSPCIVTEYLSRGSLANILLDESIEMDWGLRLQLGFDCARGMTYLHSRNPIIIHRDLKTDNLLVDDSWQVKVADFGLATVKSHTFAKTMCGTTGWVAPEVLAEEGYTEKADVYSYAIVLWELLTRLIPYAGKNTMQVVRSIDRGERLPMPAWCPPKYAALMNRCWETDPTHRPSFPEILPIMEGMISEFQKEKKESIAQGRPIPYVGPPEKDPSNKQPPQNMATTIQQQLAQQQPQQLLEQQILLQVQQQAQLQHLQQQLEQQQKLQQQLQQQIAHPNNPNNFYFQQQLQQQQFQQQLQQHQQHFQQQQQQQQQQQQQQQQQQQQQQQQLQQTGSPIDNRLNYNFNNSNNSDIQPMQQENNYRMNINDKK.

Positions Met-1–Gln-12 are enriched in polar residues. Disordered stretches follow at residues Met-1–Pro-132, Phe-156–Ile-223, and Ser-269–Glu-386. 2 stretches are compositionally biased toward low complexity: residues Thr-13–Ser-79 and Phe-156–Pro-220. Residues Glu-221–Lys-248 adopt a coiled-coil conformation. Positions Gly-271 to Asn-291 are enriched in polar residues. The segment covering Pro-302 to Ser-343 has biased composition (basic and acidic residues). The span at Ala-344–Val-354 shows a compositional bias: polar residues. The segment covering Glu-376–Glu-386 has biased composition (acidic residues). LRR repeat units follow at residues Lys-400–Ile-421, Glu-423–Leu-444, His-446–Pro-468, Arg-469–Leu-490, Ser-492–His-513, Asn-517–Ser-538, and His-540–Ser-561. Disordered regions lie at residues Trp-690–Gly-717, Pro-733–Gln-764, and Gln-796–Gln-825. Polar residues-rich tracts occupy residues Ser-701–Gly-717 and Pro-733–Asn-757. The Protein kinase domain maps to Ile-851–Ile-1104. Residues Ile-857 to Val-865 and Lys-878 each bind ATP. Asp-974 functions as the Proton acceptor in the catalytic mechanism. 2 disordered regions span residues Gly-1118–Ala-1141 and Gln-1245–Lys-1288. Low complexity predominate over residues Asn-1257–Asn-1268. The segment covering Ser-1269 to Met-1282 has biased composition (polar residues).

This sequence belongs to the protein kinase superfamily. TKL Ser/Thr protein kinase family.

It catalyses the reaction L-seryl-[protein] + ATP = O-phospho-L-seryl-[protein] + ADP + H(+). It carries out the reaction L-threonyl-[protein] + ATP = O-phospho-L-threonyl-[protein] + ADP + H(+). The protein is Probable serine/threonine-protein kinase drkD (drkD) of Dictyostelium discoideum (Social amoeba).